Consider the following 416-residue polypeptide: Phakinin (416 aa).

A disordered region spans residues 1-48 (MSKRRVAADLPSGTNSSMPVQRHRVSSLRGTHSPSSLDSPPASRTSAV). Serine 2 is subject to N-acetylserine. A head region spans residues 2-115 (SKRRVAADLP…HTTVEDLGGC (114 aa)). A phosphoserine mark is found at serine 27, serine 33, serine 36, and serine 91. The span at 28–48 (LRGTHSPSSLDSPPASRTSAV) shows a compositional bias: polar residues. Residues 105-416 (DHTTVEDLGG…HALLDREENN (312 aa)) enclose the IF rod domain. Coiled-coil stretches lie at residues 116–146 (LVEYMTKVHALEQVSQELETQLRAHLESKAK), 170–249 (LENA…VKVL), and 308–402 (QTQE…LQKD). The tract at residues 397–416 (SQLQKDVASYHALLDREENN) is tail.

This sequence belongs to the intermediate filament family. Part of a complex required for lens intermediate filament formation composed of BFSP1, BFSP2 and CRYAA. Found in a complex composed of PPL (via C-terminal linker domain), BFSP1 and BFSP2 in the retinal lens. Within the complex interacts with PPL (via C-terminal linker domain) and with BFSP1. Identified in a complex that contains VIM, EZR, AHNAK, BFSP1, BFSP2, ANK2, PLEC, PRX and spectrin. Interacts with LGSN. Interacts with VIM. Detected in retina lens fiber cells (at protein level). Also expressed in the lens epithelium, abundantly expressed in the anterior and anterolateral epithelium, less frequently expressed nearer the lens coronal equator (at protein level).

It localises to the cell membrane. The protein localises to the cytoplasm. Its subcellular location is the cytoskeleton. The protein resides in the cell cortex. In terms of biological role, required for the correct formation of lens intermediate filaments as part of a complex composed of BFSP1, BFSP2 and CRYAA. Plays a role in maintenance of retinal lens optical clarity. The sequence is that of Phakinin (Bfsp2) from Mus musculus (Mouse).